Consider the following 179-residue polypeptide: Adenine phosphoribosyltransferase (179 aa).

The protein belongs to the purine/pyrimidine phosphoribosyltransferase family. Homodimer.

The protein localises to the cytoplasm. It catalyses the reaction AMP + diphosphate = 5-phospho-alpha-D-ribose 1-diphosphate + adenine. It participates in purine metabolism; AMP biosynthesis via salvage pathway; AMP from adenine: step 1/1. Its function is as follows. Catalyzes a salvage reaction resulting in the formation of AMP, that is energically less costly than de novo synthesis. In Actinobacillus pleuropneumoniae serotype 5b (strain L20), this protein is Adenine phosphoribosyltransferase.